The chain runs to 177 residues: Inner membrane-spanning protein YciB (177 aa).

Helical transmembrane passes span 22–42 (IFIA…IHWI), 50–70 (ISLF…FFHN), 76–96 (WKIT…QFFT), 121–141 (FIWS…AYYF), and 149–169 (FKVF…SIYI).

The protein belongs to the YciB family.

It localises to the cell inner membrane. Functionally, plays a role in cell envelope biogenesis, maintenance of cell envelope integrity and membrane homeostasis. In Buchnera aphidicola subsp. Acyrthosiphon pisum (strain 5A), this protein is Inner membrane-spanning protein YciB.